Consider the following 336-residue polypeptide: Dihydroorotate dehydrogenase (quinone) (336 aa).

FMN is bound by residues 62–66 (AGLDK) and T86. Residue K66 coordinates substrate. 111–115 (NRMGF) contributes to the substrate binding site. Residues N139 and N172 each contribute to the FMN site. N172 is a binding site for substrate. The Nucleophile role is filled by S175. Residue N177 participates in substrate binding. FMN-binding residues include K217 and T245. Residue 246–247 (NT) participates in substrate binding. Residues G268, G297, and 318-319 (YS) each bind FMN.

It belongs to the dihydroorotate dehydrogenase family. Type 2 subfamily. In terms of assembly, monomer. It depends on FMN as a cofactor.

Its subcellular location is the cell membrane. The enzyme catalyses (S)-dihydroorotate + a quinone = orotate + a quinol. It functions in the pathway pyrimidine metabolism; UMP biosynthesis via de novo pathway; orotate from (S)-dihydroorotate (quinone route): step 1/1. Its function is as follows. Catalyzes the conversion of dihydroorotate to orotate with quinone as electron acceptor. This chain is Dihydroorotate dehydrogenase (quinone), found in Vibrio vulnificus (strain CMCP6).